The primary structure comprises 156 residues: RING finger protein 224 (156 aa).

The segment at 23–70 (CIICYSAYDLSVHLPRRLYCGHTFCQACMQRLDMPAHEQHWIPCPQCR) adopts an RING-type zinc-finger fold.

This Mus musculus (Mouse) protein is RING finger protein 224 (Rnf224).